We begin with the raw amino-acid sequence, 270 residues long: Phospholysine phosphohistidine inorganic pyrophosphate phosphatase (270 aa).

2 residues coordinate Mg(2+): Asp17 and Ser19. Substrate-binding positions include 17–19 (DIS), 54–55 (TN), and Lys189. A Mg(2+)-binding site is contributed by Asp214.

It belongs to the HAD-like hydrolase superfamily. In terms of assembly, homodimer. Mg(2+) serves as cofactor.

The protein localises to the cytoplasm. It is found in the nucleus. It carries out the reaction diphosphate + H2O = 2 phosphate + H(+). Its function is as follows. Phosphatase that hydrolyzes imidodiphosphate, 3-phosphohistidine and 6-phospholysine. Has broad substrate specificity and can also hydrolyze inorganic diphosphate, but with lower efficiency. The protein is Phospholysine phosphohistidine inorganic pyrophosphate phosphatase (Lhpp) of Mus musculus (Mouse).